The sequence spans 51 residues: UPF0181 protein HAPS_0710 (51 aa).

It belongs to the UPF0181 family.

This is UPF0181 protein HAPS_0710 from Glaesserella parasuis serovar 5 (strain SH0165) (Haemophilus parasuis).